Consider the following 424-residue polypeptide: Glutamate-1-semialdehyde 2,1-aminomutase (424 aa).

Position 263 is an N6-(pyridoxal phosphate)lysine (Lys-263).

It belongs to the class-III pyridoxal-phosphate-dependent aminotransferase family. HemL subfamily. In terms of assembly, homodimer. Requires pyridoxal 5'-phosphate as cofactor.

It is found in the cytoplasm. It carries out the reaction (S)-4-amino-5-oxopentanoate = 5-aminolevulinate. It participates in porphyrin-containing compound metabolism; protoporphyrin-IX biosynthesis; 5-aminolevulinate from L-glutamyl-tRNA(Glu): step 2/2. This chain is Glutamate-1-semialdehyde 2,1-aminomutase, found in Campylobacter jejuni subsp. doylei (strain ATCC BAA-1458 / RM4099 / 269.97).